The chain runs to 240 residues: Ubiquinone biosynthesis O-methyltransferase (240 aa).

S-adenosyl-L-methionine contacts are provided by R44, G64, D85, and M129.

Belongs to the methyltransferase superfamily. UbiG/COQ3 family.

The catalysed reaction is a 3-demethylubiquinol + S-adenosyl-L-methionine = a ubiquinol + S-adenosyl-L-homocysteine + H(+). It catalyses the reaction a 3-(all-trans-polyprenyl)benzene-1,2-diol + S-adenosyl-L-methionine = a 2-methoxy-6-(all-trans-polyprenyl)phenol + S-adenosyl-L-homocysteine + H(+). It functions in the pathway cofactor biosynthesis; ubiquinone biosynthesis. Functionally, O-methyltransferase that catalyzes the 2 O-methylation steps in the ubiquinone biosynthetic pathway. The chain is Ubiquinone biosynthesis O-methyltransferase from Escherichia coli O6:H1 (strain CFT073 / ATCC 700928 / UPEC).